Reading from the N-terminus, the 464-residue chain is 3-isopropylmalate dehydratase large subunit (464 aa).

Residues C345, C405, and C408 each coordinate [4Fe-4S] cluster.

Belongs to the aconitase/IPM isomerase family. LeuC type 1 subfamily. In terms of assembly, heterodimer of LeuC and LeuD. The cofactor is [4Fe-4S] cluster.

It carries out the reaction (2R,3S)-3-isopropylmalate = (2S)-2-isopropylmalate. Its pathway is amino-acid biosynthesis; L-leucine biosynthesis; L-leucine from 3-methyl-2-oxobutanoate: step 2/4. In terms of biological role, catalyzes the isomerization between 2-isopropylmalate and 3-isopropylmalate, via the formation of 2-isopropylmaleate. The chain is 3-isopropylmalate dehydratase large subunit from Bacteroides fragilis (strain ATCC 25285 / DSM 2151 / CCUG 4856 / JCM 11019 / LMG 10263 / NCTC 9343 / Onslow / VPI 2553 / EN-2).